Here is a 683-residue protein sequence, read N- to C-terminus: Zinc finger protein 510 (683 aa).

Residues 46-117 enclose the KRAB domain; that stretch reads VSFKDVTIEF…EEEFSNQSHP (72 aa). The C2H2-type 1; degenerate zinc-finger motif lies at 254–276; that stretch reads FECNKIGKAFNDKANCVKHNSSH. 9 consecutive C2H2-type zinc fingers follow at residues 404 to 426, 432 to 454, 460 to 482, 488 to 510, 516 to 538, 544 to 566, 572 to 594, 600 to 622, and 628 to 650; these read YKCN…QRTH, FECS…QRIH, YKCN…QRIH, YECS…HRIH, FQCN…QRTH, YQCN…QKTH, and FKCN…QRIH.

The protein belongs to the krueppel C2H2-type zinc-finger protein family.

It is found in the nucleus. Functionally, may be involved in transcriptional regulation. The chain is Zinc finger protein 510 (ZNF510) from Homo sapiens (Human).